The sequence spans 262 residues: S-methyl-5'-thioadenosine phosphorylase (262 aa).

Residues Ser12, 54 to 55 (RH), and 87 to 88 (SA) each bind phosphate. Residue Met185 participates in substrate binding. Thr186 is a phosphate binding site. Substrate is bound at residue 209–211 (DYD).

It belongs to the PNP/MTAP phosphorylase family. MTAP subfamily. Homohexamer. Dimer of a homotrimer.

The catalysed reaction is S-methyl-5'-thioadenosine + phosphate = 5-(methylsulfanyl)-alpha-D-ribose 1-phosphate + adenine. Its pathway is amino-acid biosynthesis; L-methionine biosynthesis via salvage pathway; S-methyl-5-thio-alpha-D-ribose 1-phosphate from S-methyl-5'-thioadenosine (phosphorylase route): step 1/1. In terms of biological role, catalyzes the reversible phosphorylation of S-methyl-5'-thioadenosine (MTA) to adenine and 5-methylthioribose-1-phosphate. Involved in the breakdown of MTA, a major by-product of polyamine biosynthesis. Responsible for the first step in the methionine salvage pathway after MTA has been generated from S-adenosylmethionine. Has broad substrate specificity with 6-aminopurine nucleosides as preferred substrates. This is S-methyl-5'-thioadenosine phosphorylase from Thermofilum pendens (strain DSM 2475 / Hrk 5).